A 1019-amino-acid polypeptide reads, in one-letter code: Insulin-degrading enzyme (1019 aa).

Residue His-108 coordinates Zn(2+). Glu-111 functions as the Proton acceptor in the catalytic mechanism. His-112 and Glu-189 together coordinate Zn(2+). Lys-192 carries the post-translational modification N6-succinyllysine. Position 359–363 (359–363) interacts with substrate; that stretch reads LVGGQ. Arg-429 is an ATP binding site. The residue at position 697 (Lys-697) is an N6-succinyllysine. The short motif at 853 to 858 is the SlyX motif element; sequence EKPPHY. An ATP-binding site is contributed by 895–901; it reads DKPKKLS.

The protein belongs to the peptidase M16 family. Homodimer. Can also form homotetramers. Zn(2+) serves as cofactor.

The protein localises to the cytoplasm. It is found in the cytosol. Its subcellular location is the cell membrane. It localises to the secreted. The enzyme catalyses Degradation of insulin, glucagon and other polypeptides. No action on proteins.. Its activity is regulated as follows. Activated by ATP, other nucleotide triphosphates and small peptides. Inhibited by bacitracin. Its function is as follows. Plays a role in the cellular breakdown of insulin, APP peptides, IAPP peptides, natriuretic peptides, glucagon, bradykinin, kallidin, and other peptides, and thereby plays a role in intercellular peptide signaling. Substrate binding induces important conformation changes, making it possible to bind and degrade larger substrates, such as insulin. Contributes to the regulation of peptide hormone signaling cascades and regulation of blood glucose homeostasis via its role in the degradation of insulin, glucagon and IAPP. Plays a role in the degradation and clearance of APP-derived amyloidogenic peptides that are secreted by neurons and microglia. Degrades the natriuretic peptides ANP, BNP and CNP, inactivating their ability to raise intracellular cGMP. Also degrades an aberrant frameshifted 40-residue form of NPPA (fsNPPA) which is associated with familial atrial fibrillation in heterozygous patients. Involved in antigen processing. Produces both the N terminus and the C terminus of MAGEA3-derived antigenic peptide (EVDPIGHLY) that is presented to cytotoxic T lymphocytes by MHC class I. This is Insulin-degrading enzyme (IDE) from Bos taurus (Bovine).